The sequence spans 201 residues: ATP-dependent Clp protease proteolytic subunit (201 aa).

Serine 103 acts as the Nucleophile in catalysis. Histidine 128 is a catalytic residue.

It belongs to the peptidase S14 family. As to quaternary structure, fourteen ClpP subunits assemble into 2 heptameric rings which stack back to back to give a disk-like structure with a central cavity, resembling the structure of eukaryotic proteasomes.

The protein resides in the cytoplasm. It carries out the reaction Hydrolysis of proteins to small peptides in the presence of ATP and magnesium. alpha-casein is the usual test substrate. In the absence of ATP, only oligopeptides shorter than five residues are hydrolyzed (such as succinyl-Leu-Tyr-|-NHMec, and Leu-Tyr-Leu-|-Tyr-Trp, in which cleavage of the -Tyr-|-Leu- and -Tyr-|-Trp bonds also occurs).. Functionally, cleaves peptides in various proteins in a process that requires ATP hydrolysis. Has a chymotrypsin-like activity. Plays a major role in the degradation of misfolded proteins. The protein is ATP-dependent Clp protease proteolytic subunit of Bordetella avium (strain 197N).